A 236-amino-acid chain; its full sequence is uncharacterized protein (236 aa).

Residues 186 to 236 (HGRGDTRNLNDITGLGHERERDRENTHYEKKPKLDSDSEVDIRSFRQDMDL) form a disordered region. Over residues 201 to 236 (GHERERDRENTHYEKKPKLDSDSEVDIRSFRQDMDL) the composition is skewed to basic and acidic residues. Residue Ser-221 is modified to Phosphoserine.

This is an uncharacterized protein from Saccharomyces cerevisiae (strain ATCC 204508 / S288c) (Baker's yeast).